The chain runs to 176 residues: Late lactation protein (176 aa).

Positions M1–A18 are cleaved as a signal peptide. C78 and C171 form a disulfide bridge.

It belongs to the calycin superfamily. Lipocalin family. In terms of tissue distribution, mammary gland. Secreted in milk.

The protein resides in the secreted. Its function is as follows. Probably serves a role in the transport of a small ligand released during the hydrolysis of milk fat. In Trichosurus vulpecula (Brush-tailed possum), this protein is Late lactation protein.